A 1045-amino-acid chain; its full sequence is Elongation factor 3 (1045 aa).

HEAT repeat units follow at residues 5-42 (DQSLKVLEELFKNLSVATADNRVEAAQEVASFLNGNII), 43-85 (EHDI…PSVE), 86-123 (PFVITLVPEICAKAGDKDKDVQAVASKTLVAISKAINP), 125-162 (AIKAYLPHLTKSLETTNKWQEKVSVLAAISALVDAAKE), 166-203 (LRMPELIPVLSETMWDTKKEVKEAATATMTKATETVDN), 205-241 (DIERFIPQLISCIADPKQVPETVHLLGATTFVAEVTP), and 242-279 (ATLSIMVPLLSRGLAERETSIKRKAAVIIDNMCKLVED). 3 residues coordinate ADP: isoleucine 42, histidine 44, and serine 83. Residues threonine 392, histidine 396, and glutamate 397 each contribute to the ADP site. ABC transporter domains follow at residues 426-641 (DEGE…YYEL) and 667-993 (VKVS…KKED). ADP is bound by residues asparagine 703, glutamate 922, asparagine 925, and histidine 951. Positions 974-1045 (SGHNWVSGQG…AYVSSDDEDF (72 aa)) are disordered. Basic residues predominate over residues 1007–1031 (GGKKKKKLSSAELRKKKKERMKKKK).

This sequence belongs to the ABC transporter superfamily. ABCF family. EF3 subfamily. As to quaternary structure, monomer.

The protein localises to the cytoplasm. The protein resides in the cytosol. It carries out the reaction ATP + H2O = ADP + phosphate + H(+). The protein operates within protein biosynthesis; polypeptide chain elongation. Ribosome-dependent ATPase that functions in cytoplasmic translation elongation. Required for the ATP-dependent release of deacylated tRNA from the ribosomal E-site during protein biosynthesis. Stimulates the eEF1A-dependent binding of aminoacyl-tRNA to the ribosomal A-site, which has reduced affinity for tRNA as long as the E-site is occupied. Assists translation termination by stimulating the release of nascent protein from the ribosome by release factors. The polypeptide is Elongation factor 3 (TEF3) (Candida glabrata (strain ATCC 2001 / BCRC 20586 / JCM 3761 / NBRC 0622 / NRRL Y-65 / CBS 138) (Yeast)).